A 203-amino-acid chain; its full sequence is Molybdenum cofactor guanylyltransferase (203 aa).

Residues 20–22 (LAG), K33, N61, D78, and D108 each bind GTP. D108 is a Mg(2+) binding site.

It belongs to the MobA family. As to quaternary structure, monomer. Mg(2+) serves as cofactor.

The protein localises to the cytoplasm. It carries out the reaction Mo-molybdopterin + GTP + H(+) = Mo-molybdopterin guanine dinucleotide + diphosphate. Its function is as follows. Transfers a GMP moiety from GTP to Mo-molybdopterin (Mo-MPT) cofactor (Moco or molybdenum cofactor) to form Mo-molybdopterin guanine dinucleotide (Mo-MGD) cofactor. The sequence is that of Molybdenum cofactor guanylyltransferase from Vibrio cholerae serotype O1 (strain ATCC 39315 / El Tor Inaba N16961).